Here is a 28-residue protein sequence, read N- to C-terminus: Putative fruR/shl operon leader peptide (28 aa).

The protein is Putative fruR/shl operon leader peptide (fruL) of Escherichia coli O6:H1 (strain CFT073 / ATCC 700928 / UPEC).